Reading from the N-terminus, the 78-residue chain is Conotoxin Cl11.1 (78 aa).

Residues 1–19 (MKLALTFLLILMILPLTTG) form the signal peptide. Residues 20 to 33 (GKKSDNQALKRLGA) constitute a propeptide that is removed on maturation. 4 cysteine pairs are disulfide-bonded: Cys47–Cys61, Cys54–Cys66, Cys60–Cys70, and Cys65–Cys77.

This sequence belongs to the conotoxin I1 superfamily. As to expression, expressed by the venom duct.

It localises to the secreted. The polypeptide is Conotoxin Cl11.1 (Californiconus californicus (California cone)).